The sequence spans 22 residues: Unknown protein 10 (22 aa).

In Pseudotsuga menziesii (Douglas-fir), this protein is Unknown protein 10.